Reading from the N-terminus, the 433-residue chain is Indole diterpene prenyltransferase terF (433 aa).

The protein belongs to the tryptophan dimethylallyltransferase family.

It functions in the pathway secondary metabolite biosynthesis. In terms of biological role, indole diterpene prenyltransferase; part of the gene cluster that mediates the biosynthesis of terpendoles, indole-diterpene (IDT) mycotoxins including terpendole I, terpendole K, terpendole C, as well as the kinesin Eg5 inhibitor terpendole E. Terpendoles biosynthesis begins with the synthesis of geranylgeranyl diphosphate (GGPP) by a yet unidentified GGPP synthase. Condensation of indole-3-glycerol phosphate with GGPP by the prenyltransferase terC then forms 3-geranylgeranylindole (3-GGI), followed by epoxidation and cyclization of this intermediate (by the FAD-dependent monooxygeanse terM and the terpene cyclase terB) to form paspaline. The cytochrome monooxygenase terQ then hydroxylates paspalline at C-11 to yield terpendole E. The cytochrome monooxygenase terP converts terpendole E to 13-desoxyterpendole I, and terQ converts 13-desoxyterpendole I into terpendole I. TerF and terK are required for conversion of terpendole I to terpendole C which is further converted to terpendole K. This Tolypocladium album (Soil fungus) protein is Indole diterpene prenyltransferase terF.